The chain runs to 510 residues: NAD(P)H-quinone oxidoreductase subunit 2, chloroplastic (510 aa).

A run of 12 helical transmembrane segments spans residues 24 to 44 (LLLF…GLIL), 59 to 79 (WFYF…LFRW), 99 to 119 (IFQF…VEYI), 124 to 144 (MAIT…MFLC), 149 to 169 (LITI…LSGY), 184 to 204 (LLMG…LYGL), 229 to 249 (ISIA…PAPF), 295 to 315 (WHLL…LIAI), 323 to 343 (MLAY…IVGD), 347 to 367 (GYAS…GTFA), 395 to 415 (ALSL…AGFF), and 418 to 438 (LHLF…IGLL).

It belongs to the complex I subunit 2 family. NDH is composed of at least 16 different subunits, 5 of which are encoded in the nucleus.

The protein resides in the plastid. It is found in the chloroplast thylakoid membrane. It carries out the reaction a plastoquinone + NADH + (n+1) H(+)(in) = a plastoquinol + NAD(+) + n H(+)(out). It catalyses the reaction a plastoquinone + NADPH + (n+1) H(+)(in) = a plastoquinol + NADP(+) + n H(+)(out). Its function is as follows. NDH shuttles electrons from NAD(P)H:plastoquinone, via FMN and iron-sulfur (Fe-S) centers, to quinones in the photosynthetic chain and possibly in a chloroplast respiratory chain. The immediate electron acceptor for the enzyme in this species is believed to be plastoquinone. Couples the redox reaction to proton translocation, and thus conserves the redox energy in a proton gradient. This is NAD(P)H-quinone oxidoreductase subunit 2, chloroplastic from Muilla maritima (Sea muilla).